The following is a 147-amino-acid chain: UPF0178 protein VS_2364 (147 aa).

Belongs to the UPF0178 family.

The protein is UPF0178 protein VS_2364 of Vibrio atlanticus (strain LGP32) (Vibrio splendidus (strain Mel32)).